The chain runs to 230 residues: Cytochrome c oxidase subunit 2 (230 aa).

The Mitochondrial intermembrane segment spans residues methionine 1–serine 14. Residues proline 15–methionine 45 form a helical membrane-spanning segment. The Mitochondrial matrix portion of the chain corresponds to valine 46–glutamine 59. The chain crosses the membrane as a helical span at residues glutamate 60–methionine 87. Over aspartate 88–alanine 230 the chain is Mitochondrial intermembrane. The Cu cation site is built by histidine 161, cysteine 196, glutamate 198, cysteine 200, histidine 204, and methionine 207. Glutamate 198 lines the Mg(2+) pocket.

This sequence belongs to the cytochrome c oxidase subunit 2 family. In terms of assembly, component of the cytochrome c oxidase (complex IV, CIV), a multisubunit enzyme composed of 14 subunits. The complex is composed of a catalytic core of 3 subunits MT-CO1, MT-CO2 and MT-CO3, encoded in the mitochondrial DNA, and 11 supernumerary subunits COX4I, COX5A, COX5B, COX6A, COX6B, COX6C, COX7A, COX7B, COX7C, COX8 and NDUFA4, which are encoded in the nuclear genome. The complex exists as a monomer or a dimer and forms supercomplexes (SCs) in the inner mitochondrial membrane with NADH-ubiquinone oxidoreductase (complex I, CI) and ubiquinol-cytochrome c oxidoreductase (cytochrome b-c1 complex, complex III, CIII), resulting in different assemblies (supercomplex SCI(1)III(2)IV(1) and megacomplex MCI(2)III(2)IV(2)). Found in a complex with TMEM177, COA6, COX18, COX20, SCO1 and SCO2. Interacts with TMEM177 in a COX20-dependent manner. Interacts with COX20. Interacts with COX16. Requires Cu cation as cofactor.

The protein resides in the mitochondrion inner membrane. The enzyme catalyses 4 Fe(II)-[cytochrome c] + O2 + 8 H(+)(in) = 4 Fe(III)-[cytochrome c] + 2 H2O + 4 H(+)(out). Functionally, component of the cytochrome c oxidase, the last enzyme in the mitochondrial electron transport chain which drives oxidative phosphorylation. The respiratory chain contains 3 multisubunit complexes succinate dehydrogenase (complex II, CII), ubiquinol-cytochrome c oxidoreductase (cytochrome b-c1 complex, complex III, CIII) and cytochrome c oxidase (complex IV, CIV), that cooperate to transfer electrons derived from NADH and succinate to molecular oxygen, creating an electrochemical gradient over the inner membrane that drives transmembrane transport and the ATP synthase. Cytochrome c oxidase is the component of the respiratory chain that catalyzes the reduction of oxygen to water. Electrons originating from reduced cytochrome c in the intermembrane space (IMS) are transferred via the dinuclear copper A center (CU(A)) of subunit 2 and heme A of subunit 1 to the active site in subunit 1, a binuclear center (BNC) formed by heme A3 and copper B (CU(B)). The BNC reduces molecular oxygen to 2 water molecules using 4 electrons from cytochrome c in the IMS and 4 protons from the mitochondrial matrix. This chain is Cytochrome c oxidase subunit 2 (MT-CO2), found in Scyliorhinus canicula (Small-spotted catshark).